The chain runs to 363 residues: Chalcone synthase B (363 aa).

Cys-170 is an active-site residue.

It belongs to the thiolase-like superfamily. Chalcone/stilbene synthases family.

The enzyme catalyses (E)-4-coumaroyl-CoA + 3 malonyl-CoA + 3 H(+) = 2',4,4',6'-tetrahydroxychalcone + 3 CO2 + 4 CoA. It functions in the pathway secondary metabolite biosynthesis; flavonoid biosynthesis. Functionally, the primary product of this enzyme is 4,2',4',6'-tetrahydroxychalcone (also termed naringenin-chalcone or chalcone) which can under specific conditions spontaneously isomerize into naringenin. This is Chalcone synthase B (CHSB) from Ipomoea cordatotriloba (Tievine).